The following is a 416-amino-acid chain: Probable protein phosphatase 2C 75 (416 aa).

Disordered stretches follow at residues 1 to 20 (MTEI…SPTK) and 32 to 51 (RRQA…DRTD). The PPM-type phosphatase domain occupies 108-411 (LYGIVSVMGR…DNISVVVIDL (304 aa)). Residues aspartate 149, glycine 150, aspartate 337, and aspartate 402 each contribute to the Mn(2+) site.

It belongs to the PP2C family. Mg(2+) serves as cofactor. The cofactor is Mn(2+).

The enzyme catalyses O-phospho-L-seryl-[protein] + H2O = L-seryl-[protein] + phosphate. The catalysed reaction is O-phospho-L-threonyl-[protein] + H2O = L-threonyl-[protein] + phosphate. Negative regulator of abscisic acid (ABA) responses during seed germination. The polypeptide is Probable protein phosphatase 2C 75 (AHG1) (Arabidopsis thaliana (Mouse-ear cress)).